The primary structure comprises 402 residues: Elongation factor Tu (402 aa).

One can recognise a tr-type G domain in the interval 10 to 212 (KPHINIGTIG…AVDEYIPEPK (203 aa)). The segment at 19–26 (GHVDHGKT) is G1. Residue 19–26 (GHVDHGKT) coordinates GTP. Thr26 provides a ligand contact to Mg(2+). Residues 60-64 (GITIA) are G2. The G3 stretch occupies residues 81–84 (DCPG). Residues 81–85 (DCPGH) and 136–139 (NKED) each bind GTP. Residues 136 to 139 (NKED) are G4. A G5 region spans residues 177-179 (SAF).

Belongs to the TRAFAC class translation factor GTPase superfamily. Classic translation factor GTPase family. EF-Tu/EF-1A subfamily. In terms of assembly, monomer.

Its subcellular location is the cytoplasm. The enzyme catalyses GTP + H2O = GDP + phosphate + H(+). In terms of biological role, GTP hydrolase that promotes the GTP-dependent binding of aminoacyl-tRNA to the A-site of ribosomes during protein biosynthesis. The protein is Elongation factor Tu of Sulfurovum sp. (strain NBC37-1).